We begin with the raw amino-acid sequence, 267 residues long: MAKPYDPKDFYYRKAKKQGLRARSAFKIEEILHRHRLLGRGDAVLDLGAAPGGFLQILAEAVGEKGVAVGVDLEPIRNLGKRWVRTAIVDLLAPDALDKIRLLHDGRFRLVTSDMAPKTIGIKVTDEARSLELVRMALSVAEQVLVPGGAFVAKVFMGGDFPALKRELQGRFAAMHVIRPEAVRESSYEVYVLGTGFRGRAAAVAPAAVKAEAPRAPAPPEQAAAPEEATAPATRAARQKPAPAKKPAAAKRPAARKRAAKKPARRA.

S-adenosyl-L-methionine is bound by residues Gly52, Phe54, Asp72, Asp90, and Asp114. The Proton acceptor role is filled by Lys154. Residues 212–252 (EAPRAPAPPEQAAAPEEATAPATRAARQKPAPAKKPAAAKR) show a composition bias toward low complexity. The disordered stretch occupies residues 212–267 (EAPRAPAPPEQAAAPEEATAPATRAARQKPAPAKKPAAAKRPAARKRAAKKPARRA). Basic residues predominate over residues 253–267 (PAARKRAAKKPARRA).

Belongs to the class I-like SAM-binding methyltransferase superfamily. RNA methyltransferase RlmE family.

It localises to the cytoplasm. It catalyses the reaction uridine(2552) in 23S rRNA + S-adenosyl-L-methionine = 2'-O-methyluridine(2552) in 23S rRNA + S-adenosyl-L-homocysteine + H(+). Its function is as follows. Specifically methylates the uridine in position 2552 of 23S rRNA at the 2'-O position of the ribose in the fully assembled 50S ribosomal subunit. This is Ribosomal RNA large subunit methyltransferase E from Anaeromyxobacter dehalogenans (strain 2CP-C).